Reading from the N-terminus, the 1623-residue chain is ATP-binding cassette sub-family A member 9 (1623 aa).

Residues 31-51 (LLEWLFSLLLILFVYQLSSNL) traverse the membrane as a helical segment. The N-linked (GlcNAc...) asparagine glycan is linked to asparagine 120. Helical transmembrane passes span 225 to 245 (FFIF…SVNI), 265 to 285 (AFWL…AVLM), 295 to 315 (VVLT…LSLI), 329 to 349 (FLTG…GFTA), 354 to 374 (LPAF…TTGM), and 398 to 418 (LIMA…VLAL). The 236-residue stretch at 481–716 (IRIKNLKKEY…WGIGYHLSLH (236 aa)) folds into the ABC transporter 1 domain. Residue 517 to 524 (GHSGAGKT) participates in ATP binding. Transmembrane regions (helical) follow at residues 863–883 (LMTV…EHLV), 1025–1045 (AFFW…GSIS), 1071–1091 (LVDI…DSVF), 1107–1127 (IPCS…ISFI), 1135–1155 (SGIW…ATDI), 1163–1183 (LLIC…LIFS), and 1199–1219 (QLVF…FFIL). Positions 1287–1520 (LRKEYIGRTK…FGKDYLLEMK (234 aa)) constitute an ABC transporter 2 domain. ATP is bound at residue 1325 to 1332 (GHNGAGKS).

It belongs to the ABC transporter superfamily. ABCA family. As to expression, highly expressed in heart and to lower extent in kidney, brain and spleen. Weakly expressed in developing and adult brains. Weakly expressed in the cerebellar granular layer at P14 and P21.

The protein localises to the membrane. Its function is as follows. Transporter that may play a role in monocyte differentiation and lipid transport and homeostasis. The sequence is that of ATP-binding cassette sub-family A member 9 (Abca9) from Mus musculus (Mouse).